Consider the following 483-residue polypeptide: Peroxisomal biogenesis factor 3 (483 aa).

Residues 1 to 14 are Peroxisomal-facing; it reads MTGNRSLVQRHRKK. A helical membrane pass occupies residues 15–35; sequence FVVSSVLFATLFATCAITVYF. The Cytoplasmic portion of the chain corresponds to 36–483; sequence SKRWLYKQHL…SACVYSNFGL (448 aa). Disordered regions lie at residues 119-149 and 230-253; these read GLSSGMSAMTPAPSVSAKSPQSADTTSVSET and NNLPSEKADPRNSDGTIDTDTRSI. Residues 242–253 are compositionally biased toward polar residues; sequence SDGTIDTDTRSI.

The protein belongs to the peroxin-3 family.

The protein resides in the peroxisome membrane. Functionally, involved in peroxisome biosynthesis. The polypeptide is Peroxisomal biogenesis factor 3 (PEX3) (Kluyveromyces lactis (strain ATCC 8585 / CBS 2359 / DSM 70799 / NBRC 1267 / NRRL Y-1140 / WM37) (Yeast)).